We begin with the raw amino-acid sequence, 248 residues long: tRNA (guanine-N(1)-)-methyltransferase (248 aa).

Residues Gly126 and 150-155 each bind S-adenosyl-L-methionine; that span reads LGDYVL. Residues 224-248 are disordered; it reads WRRTQQEERTRERRPDLWAAFDSED. A compositionally biased stretch (basic and acidic residues) spans 227-239; that stretch reads TQQEERTRERRPD.

The protein belongs to the RNA methyltransferase TrmD family. In terms of assembly, homodimer.

The protein localises to the cytoplasm. The enzyme catalyses guanosine(37) in tRNA + S-adenosyl-L-methionine = N(1)-methylguanosine(37) in tRNA + S-adenosyl-L-homocysteine + H(+). Specifically methylates guanosine-37 in various tRNAs. This is tRNA (guanine-N(1)-)-methyltransferase from Micrococcus luteus (strain ATCC 4698 / DSM 20030 / JCM 1464 / CCM 169 / CCUG 5858 / IAM 1056 / NBRC 3333 / NCIMB 9278 / NCTC 2665 / VKM Ac-2230) (Micrococcus lysodeikticus).